Consider the following 1068-residue polypeptide: Carbamoyl phosphate synthase large chain (1068 aa).

The tract at residues 1 to 403 (MPKRTDINTI…SLQKALRGLE (403 aa)) is carboxyphosphate synthetic domain. R129, R169, G175, G176, Q208, V210, E215, G241, V242, H243, Q285, and E299 together coordinate ATP. The ATP-grasp 1 domain maps to 133-328 (KEAMEKIGLS…IAKVAAKLAV (196 aa)). Q285, E299, and N301 together coordinate Mg(2+). Mn(2+)-binding residues include Q285, E299, and N301. Residues 404-548 (TGICGFNLMS…YSTYEEECES (145 aa)) are oligomerization domain. The carbamoyl phosphate synthetic domain stretch occupies residues 549 to 930 (RPSDKKKIMI…AFLKAQLGAN (382 aa)). Residues 673 to 864 (QQILHKLHLK…LAKIAARVMA (192 aa)) form the ATP-grasp 2 domain. ATP-binding residues include R709, H748, L750, E755, G780, I781, H782, S783, Q823, and E835. Residues Q823, E835, and N837 each contribute to the Mg(2+) site. Mn(2+) contacts are provided by Q823, E835, and N837. An MGS-like domain is found at 931-1068 (ERIPKTGKVF…SLQDLHQRLL (138 aa)). Positions 931 to 1068 (ERIPKTGKVF…SLQDLHQRLL (138 aa)) are allosteric domain.

Belongs to the CarB family. Composed of two chains; the small (or glutamine) chain promotes the hydrolysis of glutamine to ammonia, which is used by the large (or ammonia) chain to synthesize carbamoyl phosphate. Tetramer of heterodimers (alpha,beta)4. The cofactor is Mg(2+). Mn(2+) is required as a cofactor.

The catalysed reaction is hydrogencarbonate + L-glutamine + 2 ATP + H2O = carbamoyl phosphate + L-glutamate + 2 ADP + phosphate + 2 H(+). It catalyses the reaction hydrogencarbonate + NH4(+) + 2 ATP = carbamoyl phosphate + 2 ADP + phosphate + 2 H(+). Its pathway is amino-acid biosynthesis; L-arginine biosynthesis; carbamoyl phosphate from bicarbonate: step 1/1. It functions in the pathway pyrimidine metabolism; UMP biosynthesis via de novo pathway; (S)-dihydroorotate from bicarbonate: step 1/3. Functionally, large subunit of the glutamine-dependent carbamoyl phosphate synthetase (CPSase). CPSase catalyzes the formation of carbamoyl phosphate from the ammonia moiety of glutamine, carbonate, and phosphate donated by ATP, constituting the first step of 2 biosynthetic pathways, one leading to arginine and/or urea and the other to pyrimidine nucleotides. The large subunit (synthetase) binds the substrates ammonia (free or transferred from glutamine from the small subunit), hydrogencarbonate and ATP and carries out an ATP-coupled ligase reaction, activating hydrogencarbonate by forming carboxy phosphate which reacts with ammonia to form carbamoyl phosphate. The chain is Carbamoyl phosphate synthase large chain from Pasteurella multocida (strain Pm70).